A 125-amino-acid chain; its full sequence is Holo-[acyl-carrier-protein] synthase (125 aa).

D8 and E57 together coordinate Mg(2+).

The protein belongs to the P-Pant transferase superfamily. AcpS family. Requires Mg(2+) as cofactor.

It localises to the cytoplasm. The catalysed reaction is apo-[ACP] + CoA = holo-[ACP] + adenosine 3',5'-bisphosphate + H(+). Its function is as follows. Transfers the 4'-phosphopantetheine moiety from coenzyme A to a Ser of acyl-carrier-protein. The protein is Holo-[acyl-carrier-protein] synthase of Geobacter sp. (strain M21).